The chain runs to 378 residues: Acetylornithine deacetylase (378 aa).

Residue His-76 coordinates Zn(2+). Asp-78 is a catalytic residue. Zn(2+) is bound at residue Asp-108. The active site involves Glu-140. Residues Glu-141, Glu-165, and His-351 each coordinate Zn(2+).

This sequence belongs to the peptidase M20A family. ArgE subfamily. Homodimer. It depends on Zn(2+) as a cofactor. The cofactor is Co(2+). Glutathione is required as a cofactor.

The protein resides in the cytoplasm. The enzyme catalyses N(2)-acetyl-L-ornithine + H2O = L-ornithine + acetate. Its pathway is amino-acid biosynthesis; L-arginine biosynthesis; L-ornithine from N(2)-acetyl-L-ornithine (linear): step 1/1. Its function is as follows. Catalyzes the hydrolysis of the amide bond of N(2)-acetylated L-amino acids. Cleaves the acetyl group from N-acetyl-L-ornithine to form L-ornithine, an intermediate in L-arginine biosynthesis pathway, and a branchpoint in the synthesis of polyamines. The sequence is that of Acetylornithine deacetylase from Vibrio campbellii (strain ATCC BAA-1116).